The following is a 504-amino-acid chain: Glucose-6-phosphate isomerase (504 aa).

The active-site Proton donor is the Glu333. Catalysis depends on residues His364 and Lys473.

The protein belongs to the GPI family.

It is found in the cytoplasm. The catalysed reaction is alpha-D-glucose 6-phosphate = beta-D-fructose 6-phosphate. Its pathway is carbohydrate biosynthesis; gluconeogenesis. It functions in the pathway carbohydrate degradation; glycolysis; D-glyceraldehyde 3-phosphate and glycerone phosphate from D-glucose: step 2/4. In terms of biological role, catalyzes the reversible isomerization of glucose-6-phosphate to fructose-6-phosphate. This Xanthomonas axonopodis pv. citri (strain 306) protein is Glucose-6-phosphate isomerase.